We begin with the raw amino-acid sequence, 194 residues long: Peptidyl-tRNA hydrolase (194 aa).

Tyrosine 17 contributes to the tRNA binding site. Histidine 22 (proton acceptor) is an active-site residue. The tRNA site is built by phenylalanine 68, asparagine 70, and asparagine 116.

Belongs to the PTH family. As to quaternary structure, monomer.

The protein localises to the cytoplasm. The enzyme catalyses an N-acyl-L-alpha-aminoacyl-tRNA + H2O = an N-acyl-L-amino acid + a tRNA + H(+). Its function is as follows. Hydrolyzes ribosome-free peptidyl-tRNAs (with 1 or more amino acids incorporated), which drop off the ribosome during protein synthesis, or as a result of ribosome stalling. Catalyzes the release of premature peptidyl moieties from peptidyl-tRNA molecules trapped in stalled 50S ribosomal subunits, and thus maintains levels of free tRNAs and 50S ribosomes. This Shewanella sediminis (strain HAW-EB3) protein is Peptidyl-tRNA hydrolase.